Reading from the N-terminus, the 269-residue chain is NAD kinase (269 aa).

Catalysis depends on Asp45, which acts as the Proton acceptor. Residues Asp45 to Gly46, Asn122 to Glu123, Arg149, Asp151, and Ala186 each bind NAD(+).

It belongs to the NAD kinase family. A divalent metal cation is required as a cofactor.

Its subcellular location is the cytoplasm. It catalyses the reaction NAD(+) + ATP = ADP + NADP(+) + H(+). In terms of biological role, involved in the regulation of the intracellular balance of NAD and NADP, and is a key enzyme in the biosynthesis of NADP. Catalyzes specifically the phosphorylation on 2'-hydroxyl of the adenosine moiety of NAD to yield NADP. This is NAD kinase from Staphylococcus epidermidis (strain ATCC 35984 / DSM 28319 / BCRC 17069 / CCUG 31568 / BM 3577 / RP62A).